Consider the following 293-residue polypeptide: Aromatic amino acid exporter YddG (293 aa).

Over 1–6 the chain is Cytoplasmic; that stretch reads MTSQKA. A helical membrane pass occupies residues 7–27; that stretch reads TLIGLVAIVLWSTMVGLIRGV. Positions 15-137 constitute an EamA 1 domain; it reads VLWSTMVGLI…IALTGVCWVL (123 aa). At 28–33 the chain is on the periplasmic side; it reads SEGLGP. A helical transmembrane segment spans residues 34–54; sequence VGGAAMIYSLSGLLLIFTVGL. At 55-63 the chain is on the cytoplasmic side; that stretch reads PDIRRFPGR. The chain crosses the membrane as a helical span at residues 64–84; the sequence is YLIAGSVLFVSYEICLALSLG. Over 85–92 the chain is Periplasmic; sequence YAATRHQA. Residues 93–113 form a helical membrane-spanning segment; sequence IEVGMVNYLWPSLTILFAILF. The Cytoplasmic portion of the chain corresponds to 114-119; that stretch reads NGQKTN. The helical transmembrane segment at 120 to 140 threads the bilayer; it reads WLIVPGLLIALTGVCWVLGGE. The Periplasmic portion of the chain corresponds to 141 to 147; the sequence is NGLNPGE. Residues 148–168 form a helical membrane-spanning segment; sequence IISNVATSPLSYLLAFLGAFI. Positions 167 to 285 constitute an EamA 2 domain; sequence FIWATYCTVT…AVMVCVGSLL (119 aa). Residues 169–182 are Cytoplasmic-facing; the sequence is WATYCTVTNKYARG. The helical transmembrane segment at 183–203 threads the bilayer; that stretch reads FNGITVFVLLTAVALWLHYFL. Residues 204–207 are Periplasmic-facing; the sequence is TPQP. Residues 208–228 traverse the membrane as a helical segment; it reads AMIFSLPVIAKLFTAALTLGF. At 229–243 the chain is on the cytoplasmic side; that stretch reads AYAAWNVGILHGNVT. Residues 244–264 traverse the membrane as a helical segment; it reads IMAVGSYFTPVMSSALAALLL. Residues 265 to 267 are Periplasmic-facing; it reads SSP. The chain crosses the membrane as a helical span at residues 268–288; that stretch reads LSFSFWQGAVMVCVGSLLCWL. Residues 289 to 293 lie on the Cytoplasmic side of the membrane; that stretch reads ATRRR.

This sequence belongs to the drug/metabolite transporter (DMT) superfamily. Aromatic amino acid/paraquat exporter (ArAA/P-E) (TC 2.A.7.17) family.

It is found in the cell inner membrane. In terms of biological role, amino acid transporter with broad substrate specificity. Required for resistance to methyl viologen. May function with OmpD porin. This chain is Aromatic amino acid exporter YddG (yddG), found in Salmonella typhimurium (strain 14028s / SGSC 2262).